The chain runs to 1694 residues: MLNKKFKLNFIALTVAYALTPYTEAALVRDDVDYQIFRDFAENKGRFSVGATNVEVRDKNNHSLGNVLPNGIPMIDFSVVDVDKRIATLINPQYVVGVKHVSNGVSELHFGNLNGNMNNGNAKSHRDVSSEENRYFSVEKNEYPTKLNGKAVTTEDQTQKRREDYYMPRLDKFVTEVAPIEASTASSDAGTYNDQNKYPAFVRLGSGSQFIYKKGDNYSLILNNHEVGGNNLKLVGDAYTYGIAGTPYKVNHENNGLIGFGNSKEEHSDPKGILSQDPLTNYAVLGDSGSPLFVYDREKGKWLFLGSYDFWAGYNKKSWQEWNIYKPEFAKTVLDKDTAGSLTGSNTQYNWNPTGKTSVISNGSESLNVDLFDSSQDTDSKKNNHGKSVTLRGSGTLTLNNNIDQGAGGLFFEGDYEVKGTSDSTTWKGAGVSVADGKTVTWKVHNPKSDRLAKIGKGTLIVEGKGENKGSLKVGDGTVILKQQADANNKVKAFSQVGIVSGRSTVVLNDDKQVDPNSIYFGFRGGRLDANGNNLTFEHIRNIDDGARLVNHNTSKTSTVTITGESLITDPNTITPYNIDAPDEDNPYAFRRIKDGGQLYLNLENYTYYALRKGASTRSELPKNSGESNENWLYMGKTSDEAKRNVMNHINNERMNGFNGYFGEEEGKNNGNLNVTFKGKSEQNRFLLTGGTNLNGDLKVEKGTLFLSGRPTPHARDIAGISSTKKDQHFAENNEVVVEDDWINRNFKATNINVTNNATLYSGRNVANITSNITASDNAKVHIGYKAGDTVCVRSDYTGYVTCTTDKLSDKALNSFNATNVSGNVNLSGNANFVLGKANLFGTISGTGNSQVRLTENSHWHLTGDSNVNQLNLDKGHIHLNAQNDANKVTTYNTLTVNSLSGNGSFYYLTDLSNKQGDKVVVTKSATGNFTLQVADKTGEPTKNELTLFDASNATRNNLNVSLVGNTVDLGAWKYKLRNVNGRYDLYNPEVEKRNQTVDTTNITTPNNIQADVPSVPSNNEEIARVETPVPPPAPATPSETTETVAENSKQESKTVEKNEQDATETTAQNGEVAEEAKPSVKANTQTNEVAQSGSETEETQTTEIKETAKVEKEEKAKVEKDEIQEAPQMASETSPKQAKPAPKEVSTDTKVEETQVQAQPQTQSTTVAAAEATSPNSKPAEETQPSEKTNAEPVTPVVSKNQTENTTDQPTEREKTAKVETEKTQEPPQVASQASPKQEQSETVQPQAVLESENVPTVNNAEEVQAQLQTQTSATVSTKQPAPENSINTGSATAITETAEKSDKPQTETAASTEDASQHKANTVADNSVANNSESSDPKSRRRRSISQPQETSAEETTAASTDETTIADNSKRSKPNRRSRRSVRSEPTVTNGSDRSTVALRDLTSTNTNAVISDAMAKAQFVALNVGKAVSQHISQLEMNNEGQYNVWVSNTSMNENYSSSQYRRFSSKSTQTQLGWDQTISNNVQLGGVFTYVRNSNNFDKASSKNTLAQVNFYSKYYADNHWYLGIDLGYGKFQSNLKTNHNAKFARHTAQFGLTAGKAFNLGNFGITPIVGVRYSYLSNANFALAKDRIKVNPISVKTAFAQVDLSYTYHLGEFSVTPILSARYDTNQGSGKINVNQYDFAYNVENQQQYNAGLKLKYHNVKLSLIGGLTKAKQAEKQKTAELKLSFSF.

A signal peptide spans 1 to 25; it reads MLNKKFKLNFIALTVAYALTPYTEA. One can recognise a Peptidase S6 domain in the interval 26 to 332; that stretch reads ALVRDDVDYQ…NIYKPEFAKT (307 aa). Ser288 is a catalytic residue. Residues 991–1403 are disordered; sequence VEKRNQTVDT…GSDRSTVALR (413 aa). The span at 997-1021 shows a compositional bias: polar residues; that stretch reads TVDTTNITTPNNIQADVPSVPSNNE. Residues 1037-1047 show a composition bias toward low complexity; it reads TPSETTETVAE. A compositionally biased stretch (basic and acidic residues) spans 1049-1061; that stretch reads SKQESKTVEKNEQ. Positions 1082-1095 are enriched in polar residues; sequence KANTQTNEVAQSGS. Basic and acidic residues-rich tracts occupy residues 1104–1124 and 1142–1154; these read EIKE…KDEI and APKE…KVEE. 2 stretches are compositionally biased toward polar residues: residues 1155–1178 and 1199–1210; these read TQVQ…SPNS and VSKNQTENTTDQ. The segment covering 1211-1226 has biased composition (basic and acidic residues); the sequence is PTEREKTAKVETEKTQ. Composition is skewed to polar residues over residues 1227-1247, 1255-1297, and 1308-1336; these read EPPQ…TVQP, NVPT…TAIT, and TETA…NSES. A compositionally biased stretch (low complexity) spans 1352–1370; it reads ETSAEETTAASTDETTIAD. Residues 1374 to 1384 are compositionally biased toward basic residues; that stretch reads RSKPNRRSRRS. One can recognise an Autotransporter domain in the interval 1442 to 1694; the sequence is NNEGQYNVWV…TAELKLSFSF (253 aa).

The protein resides in the periplasm. It is found in the secreted. It localises to the cell surface. Its subcellular location is the cell outer membrane. It catalyses the reaction Cleavage of immunoglobulin A molecules at certain Pro-|-Xaa bonds in the hinge region. No small molecule substrates are known.. Functionally, virulence factor; cleaves host immunoglobulin A producing intact Fc and Fab fragments. The chain is Immunoglobulin A1 protease autotransporter (iga) from Haemophilus influenzae (strain ATCC 51907 / DSM 11121 / KW20 / Rd).